Reading from the N-terminus, the 44-residue chain is Photosystem I reaction center subunit IX (44 aa).

Residues 7 to 27 (YLSVAPVLSTLSLGFFAGFLI) traverse the membrane as a helical segment.

This sequence belongs to the PsaJ family.

The protein resides in the plastid membrane. In terms of biological role, may help in the organization of the PsaE and PsaF subunits. In Cuscuta obtusiflora (Peruvian dodder), this protein is Photosystem I reaction center subunit IX.